Consider the following 844-residue polypeptide: Cell division cycle 5-like protein (844 aa).

HTH myb-type domains follow at residues 2-57 (RIMI…DPSI) and 58-107 (KKTE…DAAC). 2 consecutive DNA-binding regions (H-T-H motif) follow at residues 30 to 53 (WARI…YEWL) and 81 to 103 (WRTI…EKLL). The span at 113 to 126 (YDAADDPRKLRPGE) shows a compositional bias: basic and acidic residues. Residues 113 to 147 (YDAADDPRKLRPGEIDPNPEAKPARPDPVDMDEDE) form a disordered region. A coiled-coil region spans residues 145–189 (EDEKEMLSEARARLANTRGKKAKRKAREKQLEEARRLASLQKRRE). Residue T343 is modified to Phosphothreonine. The tract at residues 379 to 514 (QTPLLGGENP…PEEKIEEDMS (136 aa)) is disordered. 2 stretches are compositionally biased toward polar residues: residues 406 to 416 (QTPNPMLTPSM) and 433 to 442 (RDGSSFSMTP). Basic and acidic residues predominate over residues 446-475 (PFRDELHINEDMDMHESAKLERQRREEARR). Residues 500–513 (EESEEPEEKIEEDM) are compositionally biased toward acidic residues. Positions 685–723 (GNADKVAAFQEEMENVRKKMEEDEKKAEHMKAKYKTYTK) form a coiled coil.

Belongs to the CEF1 family. Component of the multiprotein assembly MOS4-associated complex (MAC) at least composed of MOS4, CDC5, PRL1 and PRP19. Interacts with PRL1, MOS4 and PRP19A. Associated with the spliceosome. Expressed extensively in shoot and root meristems.

Its subcellular location is the nucleus. Functionally, component of the MAC complex that probably regulates defense responses through transcriptional control and thereby is essential for plant innate immunity. Possesses a sequence specific DNA sequence 'CTCAGCG' binding activity. Involved in mRNA splicing and cell cycle control. May also play a role in the response to DNA damage. This is Cell division cycle 5-like protein (CDC5) from Arabidopsis thaliana (Mouse-ear cress).